The primary structure comprises 629 residues: tRNA uridine 5-carboxymethylaminomethyl modification enzyme MnmG (629 aa).

FAD-binding positions include 14–19 (GAGHAG), valine 126, and serine 181. Residue 273–287 (GPRYCPSIEDKVVRF) participates in NAD(+) binding. Residue glutamine 370 participates in FAD binding.

Belongs to the MnmG family. In terms of assembly, homodimer. Heterotetramer of two MnmE and two MnmG subunits. Requires FAD as cofactor.

The protein localises to the cytoplasm. NAD-binding protein involved in the addition of a carboxymethylaminomethyl (cmnm) group at the wobble position (U34) of certain tRNAs, forming tRNA-cmnm(5)s(2)U34. The protein is tRNA uridine 5-carboxymethylaminomethyl modification enzyme MnmG of Bacillus cereus (strain ATCC 14579 / DSM 31 / CCUG 7414 / JCM 2152 / NBRC 15305 / NCIMB 9373 / NCTC 2599 / NRRL B-3711).